Here is a 124-residue protein sequence, read N- to C-terminus: Small ribosomal subunit protein eS25 (124 aa).

The span at 1–22 (MPPKDSKQKKDAGKSKKDKDPV) shows a compositional bias: basic and acidic residues. Positions 1–37 (MPPKDSKQKKDAGKSKKDKDPVNKSGGKAKKKKWSKG) are disordered. Positions 27–37 (GKAKKKKWSKG) are enriched in basic residues.

It belongs to the eukaryotic ribosomal protein eS25 family. Component of the small ribosomal subunit.

The protein resides in the cytoplasm. Component of the small ribosomal subunit. The ribosome is a large ribonucleoprotein complex responsible for the synthesis of proteins in the cell. The sequence is that of Small ribosomal subunit protein eS25 (rps25) from Danio rerio (Zebrafish).